A 284-amino-acid polypeptide reads, in one-letter code: UPF0276 protein PA14_21580 (284 aa).

Belongs to the UPF0276 family.

This Pseudomonas aeruginosa (strain UCBPP-PA14) protein is UPF0276 protein PA14_21580.